The sequence spans 360 residues: Homoserine O-acetyltransferase (360 aa).

Residues 41-344 (NAILICHALT…DYGHDAFLVD (304 aa)) form the AB hydrolase-1 domain. The active-site Nucleophile is Ser-144. Arg-213 provides a ligand contact to substrate. Catalysis depends on residues Asp-305 and His-338. Position 339 (Asp-339) interacts with substrate.

It belongs to the AB hydrolase superfamily. MetX family. In terms of assembly, homodimer.

It localises to the cytoplasm. The enzyme catalyses L-homoserine + acetyl-CoA = O-acetyl-L-homoserine + CoA. The protein operates within amino-acid biosynthesis; L-methionine biosynthesis via de novo pathway; O-acetyl-L-homoserine from L-homoserine: step 1/1. Transfers an acetyl group from acetyl-CoA to L-homoserine, forming acetyl-L-homoserine. The polypeptide is Homoserine O-acetyltransferase (Pasteurella multocida (strain Pm70)).